Here is a 243-residue protein sequence, read N- to C-terminus: MGHKIHPSGLRLGITQEHRSKWFATSKTYPILLQEDFKIRTFIQKKYGAAGISDVLIARKADQLELELKTARPGVIVGRQGSGIEELRSGIQKTIGDRTRQVRINVVEVERVDADAFLLAEYIAQQLEKRVAFRRTIRMALQRAQRAGVLGLKIQVGGRLNGAEIARTEWTREGRVPLHTLRAEIDYATREANTTYGVLGIKVWVFKGEVLPKEEQTIPVGASPKRKASRRPQQFEDRSNENS.

The region spanning 39 to 110 (IRTFIQKKYG…QVRINVVEVE (72 aa)) is the KH type-2 domain. The disordered stretch occupies residues 216–243 (QTIPVGASPKRKASRRPQQFEDRSNENS). Positions 233-243 (QQFEDRSNENS) are enriched in basic and acidic residues.

It belongs to the universal ribosomal protein uS3 family. Part of the 30S ribosomal subunit. Forms a tight complex with proteins S10 and S14.

In terms of biological role, binds the lower part of the 30S subunit head. Binds mRNA in the 70S ribosome, positioning it for translation. In Prochlorococcus marinus (strain AS9601), this protein is Small ribosomal subunit protein uS3.